The sequence spans 378 residues: Ecotin-like protein 3 (378 aa).

Disordered regions lie at residues 191 to 216 and 238 to 378; these read HRLSSSTPPLIPSAVRGSAHEAHAAP and PQNN…KADP. The span at 274-287 shows a compositional bias: polar residues; the sequence is NEPSPSRPRLSSTE. Basic and acidic residues predominate over residues 337-348; it reads RKAEDNVYEKTM. Positions 362–378 are enriched in low complexity; that stretch reads KASASSKKSGNGSKADP.

The protein belongs to the protease inhibitor I11 (ecotin) family.

This Leishmania infantum protein is Ecotin-like protein 3.